The chain runs to 449 residues: TNF receptor-associated factor family protein DDB_G0272340 (449 aa).

An RING-type; degenerate zinc finger spans residues 33-76; that stretch reads CPICEECIMDVNKCEALQCKEGHVHCRLCWMKSLESKKECMTCR. 2 TRAF-type zinc fingers span residues 133 to 187 and 189 to 251; these read GHIK…IDDS and VHYS…SELS. A coiled-coil region spans residues 263 to 309; the sequence is MEATIDQHICKFEKSEKEYKKLELEYNRLKDDFKILQSELKVIRELK. An MATH domain is found at 311 to 437; that stretch reads NYQNKWVITN…QNSVTLNINI (127 aa).

This sequence belongs to the TNF receptor-associated factor family. A subfamily.

It is found in the cytoplasm. Probable adapter protein and signal transducer that links members of the tumor necrosis factor receptor family to different signaling pathways by association with the receptor cytoplasmic domain and kinases. This is TNF receptor-associated factor family protein DDB_G0272340 from Dictyostelium discoideum (Social amoeba).